The primary structure comprises 861 residues: Probable beta-glucosidase A (861 aa).

A signal peptide spans 1 to 19 (MKLSILEAAALTAASVASA). Residues N62, N212, and N253 are each glycosylated (N-linked (GlcNAc...) asparagine). D281 is an active-site residue. 8 N-linked (GlcNAc...) asparagine glycosylation sites follow: N316, N323, N355, N524, N543, N565, N669, and N713. Positions 735–754 (PEGATDGSPQPRLPASGGPG) are disordered.

This sequence belongs to the glycosyl hydrolase 3 family.

It is found in the secreted. It catalyses the reaction Hydrolysis of terminal, non-reducing beta-D-glucosyl residues with release of beta-D-glucose.. The protein operates within glycan metabolism; cellulose degradation. Functionally, beta-glucosidases are one of a number of cellulolytic enzymes involved in the degradation of cellulosic biomass. Catalyzes the last step releasing glucose from the inhibitory cellobiose. The sequence is that of Probable beta-glucosidase A (bglA) from Aspergillus terreus.